Reading from the N-terminus, the 123-residue chain is Small ribosomal subunit protein uS13 (123 aa).

It belongs to the universal ribosomal protein uS13 family. As to quaternary structure, part of the 30S ribosomal subunit. Forms a loose heterodimer with protein S19. Forms two bridges to the 50S subunit in the 70S ribosome.

Located at the top of the head of the 30S subunit, it contacts several helices of the 16S rRNA. In the 70S ribosome it contacts the 23S rRNA (bridge B1a) and protein L5 of the 50S subunit (bridge B1b), connecting the 2 subunits; these bridges are implicated in subunit movement. Contacts the tRNAs in the A and P-sites. The polypeptide is Small ribosomal subunit protein uS13 (Neorickettsia sennetsu (strain ATCC VR-367 / Miyayama) (Ehrlichia sennetsu)).